The sequence spans 196 residues: Molybdenum cofactor guanylyltransferase (196 aa).

Residues 10–12, Lys-23, Asn-51, Asp-69, and Asp-99 contribute to the GTP site; that span reads LAG. Residue Asp-99 participates in Mg(2+) binding.

It belongs to the MobA family. Monomer. Mg(2+) is required as a cofactor.

It localises to the cytoplasm. It carries out the reaction Mo-molybdopterin + GTP + H(+) = Mo-molybdopterin guanine dinucleotide + diphosphate. In terms of biological role, transfers a GMP moiety from GTP to Mo-molybdopterin (Mo-MPT) cofactor (Moco or molybdenum cofactor) to form Mo-molybdopterin guanine dinucleotide (Mo-MGD) cofactor. The polypeptide is Molybdenum cofactor guanylyltransferase (Shewanella sediminis (strain HAW-EB3)).